We begin with the raw amino-acid sequence, 128 residues long: Glycine cleavage system H protein (128 aa).

The Lipoyl-binding domain occupies 24–106 (VYSVGITEHA…YTDGWLFSIK (83 aa)). At Lys65 the chain carries N6-lipoyllysine.

Belongs to the GcvH family. The glycine cleavage system is composed of four proteins: P, T, L and H. The cofactor is (R)-lipoate.

The glycine cleavage system catalyzes the degradation of glycine. The H protein shuttles the methylamine group of glycine from the P protein to the T protein. The protein is Glycine cleavage system H protein of Yersinia enterocolitica serotype O:8 / biotype 1B (strain NCTC 13174 / 8081).